A 149-amino-acid chain; its full sequence is 3-hydroxyacyl-[acyl-carrier-protein] dehydratase FabZ (149 aa).

Residue H53 is part of the active site.

The protein belongs to the thioester dehydratase family. FabZ subfamily.

It is found in the cytoplasm. It carries out the reaction a (3R)-hydroxyacyl-[ACP] = a (2E)-enoyl-[ACP] + H2O. Involved in unsaturated fatty acids biosynthesis. Catalyzes the dehydration of short chain beta-hydroxyacyl-ACPs and long chain saturated and unsaturated beta-hydroxyacyl-ACPs. The chain is 3-hydroxyacyl-[acyl-carrier-protein] dehydratase FabZ from Polynucleobacter asymbioticus (strain DSM 18221 / CIP 109841 / QLW-P1DMWA-1) (Polynucleobacter necessarius subsp. asymbioticus).